The sequence spans 214 residues: Large ribosomal subunit protein eL14 (214 aa).

An N6-acetyllysine modification is found at Lys79. Position 85 is an N6-acetyllysine; alternate (Lys85). N6-succinyllysine; alternate is present on Lys85. A Glycyl lysine isopeptide (Lys-Gly) (interchain with G-Cter in SUMO2) cross-link involves residue Lys124. Ser139 is subject to Phosphoserine. The disordered stretch occupies residues 161–214; the sequence is PAKKITTEGKKAPAQKAPAQKAAGQKAAPPPKTQKGQKAPSQKAPAPKASGKKA. A 1-1; approximate repeat occupies 170-174; sequence KKAPA. A 4 X 5 AA tandem repeats of Q-K-A-[APS]-X region spans residues 170–189; sequence KKAPAQKAPAQKAAGQKAAP. Residues 172 to 214 show a composition bias toward low complexity; the sequence is APAQKAPAQKAAGQKAAPPPKTQKGQKAPSQKAPAPKASGKKA. 5 tandem repeats follow at residues 175–179, 180–184, 185–189, 192–194, and 195–197. Residues 192–197 are 2 X 3 AA tandem repeats of K-G-Q; sequence KTQKGQ. Lys203 is modified (N6-succinyllysine).

This sequence belongs to the eukaryotic ribosomal protein eL14 family. In terms of assembly, component of the large ribosomal subunit.

Its subcellular location is the cytoplasm. Functionally, component of the large ribosomal subunit. The ribosome is a large ribonucleoprotein complex responsible for the synthesis of proteins in the cell. The sequence is that of Large ribosomal subunit protein eL14 (RPL14) from Bos taurus (Bovine).